We begin with the raw amino-acid sequence, 446 residues long: MQVSLESTSSIERRMTIGVPATQVNSEVEKRLQKTARTVRMNGFRPGKVPMSVVKKRYGEGVRQEVIGEMMRDAYVEALQKEDLNPAGYPKFEPKKIEDGEDLEFIATFEIYPEVSIGDLSSISVEKEDFEIVDADVDSMIEKLRQQSSEWKDSEDAAAEGDRLTIDFKGMIDGEAFEGGSAQNAQIVIGSQRMIPGFEDGLVGLKAGDEKTLDLTFPEDYHAENLKGKLAQFEVKVSKVERSELPEINDEFFAQYGVQEGGEEAFKVEIRKNMEREARFAIANKVKQQVVDQLLGLSEFEVPSALVDSEVNRMREDAVQRFGGGQMKASQLPAELFKDQAVKRVKTGLIFAQVVKDNNLEATEEQIEAKIRELASSYQEPEQVVSWYMSNPEQKAQMQSVVLEDVVVDFVADKAKIETKSVSYEDAVKPRTAPAEQAEDGEQSAE.

A PPIase FKBP-type domain is found at 161–246; that stretch reads GDRLTIDFKG…VSKVERSELP (86 aa). The tract at residues 422 to 446 is disordered; it reads VSYEDAVKPRTAPAEQAEDGEQSAE. Acidic residues predominate over residues 437–446; sequence QAEDGEQSAE.

Belongs to the FKBP-type PPIase family. Tig subfamily.

The protein localises to the cytoplasm. The catalysed reaction is [protein]-peptidylproline (omega=180) = [protein]-peptidylproline (omega=0). In terms of biological role, involved in protein export. Acts as a chaperone by maintaining the newly synthesized protein in an open conformation. Functions as a peptidyl-prolyl cis-trans isomerase. In Hahella chejuensis (strain KCTC 2396), this protein is Trigger factor.